Here is a 189-residue protein sequence, read N- to C-terminus: Ras-like protein 1 (189 aa).

10 to 17 (GAGGVGKS) provides a ligand contact to GTP. The Effector region motif lies at 32–40 (YDPTIEDSY). GTP is bound by residues 57-61 (DTAGQ) and 116-119 (NKCD). Cys186 bears the Cysteine methyl ester mark. Cys186 carries the S-geranylgeranyl cysteine lipid modification. The propeptide at 187-189 (KML) is removed in mature form.

The protein belongs to the small GTPase superfamily. Ras family.

The protein resides in the cell membrane. The catalysed reaction is GTP + H2O = GDP + phosphate + H(+). With respect to regulation, alternates between an inactive form bound to GDP and an active form bound to GTP. Activated by a guanine nucleotide-exchange factor (GEF) and inactivated by a GTPase-activating protein (GAP). Ras proteins bind GDP/GTP and possess intrinsic GTPase activity. Plays a role in eye development by regulating cell growth, survival of postmitotic ommatidial cells and differentiation of photoreceptor cells. During larval development, mediates Ptth/tor signaling leading to the production of ecdysone, a hormone required for the initiation of metamorphosis. In Drosophila willistoni (Fruit fly), this protein is Ras-like protein 1.